A 118-amino-acid chain; its full sequence is UPF0342 protein LCK_01004 (118 aa).

Belongs to the UPF0342 family.

This Leuconostoc citreum (strain KM20) protein is UPF0342 protein LCK_01004.